The sequence spans 149 residues: Flagellar assembly factor FliW (149 aa).

This sequence belongs to the FliW family. In terms of assembly, interacts with translational regulator CsrA and flagellin(s).

Its subcellular location is the cytoplasm. Functionally, acts as an anti-CsrA protein, binds CsrA and prevents it from repressing translation of its target genes, one of which is flagellin. Binds to flagellin and participates in the assembly of the flagellum. In Thermotoga petrophila (strain ATCC BAA-488 / DSM 13995 / JCM 10881 / RKU-1), this protein is Flagellar assembly factor FliW.